Here is a 243-residue protein sequence, read N- to C-terminus: Zinc import ATP-binding protein ZnuC (243 aa).

Residues 8-225 (LNLSNVSYYI…SEFQKLFGHH (218 aa)) enclose the ABC transporter domain. 40 to 47 (GPNGAGKS) provides a ligand contact to ATP.

Belongs to the ABC transporter superfamily. Zinc importer (TC 3.A.1.15.5) family. In terms of assembly, the complex is composed of two ATP-binding proteins (ZnuC), two transmembrane proteins (ZnuB) and a solute-binding protein (ZnuA).

It localises to the cell inner membrane. The enzyme catalyses Zn(2+)(out) + ATP(in) + H2O(in) = Zn(2+)(in) + ADP(in) + phosphate(in) + H(+)(in). Part of the ABC transporter complex ZnuABC involved in zinc import. Responsible for energy coupling to the transport system. This Psychrobacter cryohalolentis (strain ATCC BAA-1226 / DSM 17306 / VKM B-2378 / K5) protein is Zinc import ATP-binding protein ZnuC.